Consider the following 371-residue polypeptide: Probable beta-1,3-galactosyltransferase 12 (371 aa).

The tract at residues 1–36 is disordered; the sequence is MPLFSHRFTTASSSSPASPSYYNKPSSKTHKPNSSS. Over residues 11 to 36 the composition is skewed to low complexity; it reads ASSSSPASPSYYNKPSSKTHKPNSSS. Residues 46 to 66 traverse the membrane as a helical; Signal-anchor for type II membrane protein segment; the sequence is VAIIFFSLVSVFIGVAGTIFA. An N-linked (GlcNAc...) asparagine glycan is attached at asparagine 291.

It belongs to the glycosyltransferase 31 family. The cofactor is Mn(2+).

Its subcellular location is the golgi apparatus membrane. The protein operates within protein modification; protein glycosylation. Beta-1,3-galactosyltransferase that transfers galactose from UDP-galactose to substrates with a terminal glycosyl residue. The chain is Probable beta-1,3-galactosyltransferase 12 (B3GALT12) from Arabidopsis thaliana (Mouse-ear cress).